The following is a 485-amino-acid chain: Glutamate mutase epsilon subunit (485 aa).

Position 100 (Arg-100) interacts with L-glutamate. Residue Asn-123 coordinates adenosylcob(III)alamin. L-glutamate-binding positions include 149 to 150 and Asp-171; that span reads KH. The adenosylcob(III)alamin site is built by Pro-180, Phe-297, Lys-326, and Glu-330.

The protein belongs to the methylaspartate mutase GlmE subunit family. In terms of assembly, heterotetramer composed of 2 epsilon subunits (GlmE) and 2 sigma subunits (GlmS). GlmE exists as a homodimer and GlmS as a monomer. Requires adenosylcob(III)alamin as cofactor.

It carries out the reaction (2S,3S)-3-methyl-L-aspartate = L-glutamate. It functions in the pathway amino-acid degradation; L-glutamate degradation via mesaconate pathway; acetate and pyruvate from L-glutamate: step 1/4. Its function is as follows. Catalyzes the carbon skeleton rearrangement of L-glutamate to L-threo-3-methylaspartate ((2S,3S)-3-methylaspartate). This Fusobacterium nucleatum subsp. nucleatum (strain ATCC 25586 / DSM 15643 / BCRC 10681 / CIP 101130 / JCM 8532 / KCTC 2640 / LMG 13131 / VPI 4355) protein is Glutamate mutase epsilon subunit.